The chain runs to 298 residues: ADP/ATP translocase 1 (298 aa).

Over 1–7 the chain is Mitochondrial intermembrane; that stretch reads MSDQALS. The residue at position 2 (serine 2) is an N-acetylserine. One copy of the Solcar 1 repeat lies at 6-98; sequence LSFLKDFLAG…FAFKDKYKQI (93 aa). Serine 7 bears the Phosphoserine mark. The helical transmembrane segment at 8–37 threads the bilayer; sequence FLKDFLAGGVAAAVSKTAVAPIERVKLLLQ. Over 38-74 the chain is Mitochondrial matrix; sequence VQHASKQISAEKQYKGIIDCVVRIPKEQGFLSFWRGN. Lysine 52 bears the N6,N6,N6-trimethyllysine mark. A helical membrane pass occupies residues 75–99; sequence LANVIRYFPTQALNFAFKDKYKQIF. ADP contacts are provided by arginine 80 and lysine 92. Topologically, residues 100–109 are mitochondrial intermembrane; it reads LGGVDRHKQF. A helical membrane pass occupies residues 110 to 130; sequence WRYFAGNLASGGAAGATSLCF. Solcar repeat units lie at residues 111-201 and 212-297; these read RYFA…AKGM and VSWM…IKKY. Over 131 to 178 the chain is Mitochondrial matrix; sequence VYPLDFARTRLAADVGKGAAQREFSGLGNCLTKIFKSDGLRGLYQGFN. Lysine 147 carries the N6-succinyllysine modification. Cysteine 160 bears the S-nitrosocysteine mark. The helical transmembrane segment at 179–199 threads the bilayer; the sequence is VSVQGIIIYRAAYFGVYDTAK. Topologically, residues 200–210 are mitochondrial intermembrane; it reads GMLPDPKNVHI. The chain crosses the membrane as a helical span at residues 211-231; the sequence is IVSWMIAQTVTAVAGLVSYPF. The Mitochondrial matrix segment spans residues 232–273; it reads DTVRRRMMMQSGRKGADIMYTGTVDCWKKIAKDEGAKAFFKG. Arginine 235 is a binding site for ADP. The segment at 235 to 240 is important for transport activity; that stretch reads RRRMMM. A Nucleotide carrier signature motif motif is present at residues 235-240; that stretch reads RRRMMM. Lysine 245 and lysine 272 each carry N6-succinyllysine. Residues 274 to 291 form a helical membrane-spanning segment; sequence AWSNVLRGMGGAFVLVLY. Residues 292 to 298 are Mitochondrial intermembrane-facing; sequence DEIKKYV.

This sequence belongs to the mitochondrial carrier (TC 2.A.29) family. In terms of assembly, monomer. Found in a complex with ARL2, ARL2BP and SLC25A4/ANT1. Interacts with ARL2BP. Interacts with TIMM44; leading to inhibit the presequence translocase TIMM23, thereby promoting stabilization of PINK1. Under cell death induction, transglutaminated by TGM2. Transglutamination leads to formation of covalent cross-links between a glutamine and the epsilon-amino group of a lysine residue, forming polymers.

It localises to the mitochondrion inner membrane. The protein localises to the membrane. The enzyme catalyses ADP(in) + ATP(out) = ADP(out) + ATP(in). It carries out the reaction H(+)(in) = H(+)(out). With respect to regulation, the matrix-open state (m-state) is inhibited by the membrane-permeable bongkrekic acid (BKA). The cytoplasmic-open state (c-state) is inhibited by the membrane-impermeable toxic inhibitor carboxyatractyloside (CATR). Proton transporter activity is inhibited by ADP:ATP antiporter activity. Its function is as follows. ADP:ATP antiporter that mediates import of ADP into the mitochondrial matrix for ATP synthesis, and export of ATP out to fuel the cell. Cycles between the cytoplasmic-open state (c-state) and the matrix-open state (m-state): operates by the alternating access mechanism with a single substrate-binding site intermittently exposed to either the cytosolic (c-state) or matrix (m-state) side of the inner mitochondrial membrane. In addition to its ADP:ATP antiporter activity, also involved in mitochondrial uncoupling and mitochondrial permeability transition pore (mPTP) activity. Plays a role in mitochondrial uncoupling by acting as a proton transporter: proton transport uncouples the proton flows via the electron transport chain and ATP synthase to reduce the efficiency of ATP production and cause mitochondrial thermogenesis. Proton transporter activity is inhibited by ADP:ATP antiporter activity, suggesting that SLC25A4/ANT1 acts as a master regulator of mitochondrial energy output by maintaining a delicate balance between ATP production (ADP:ATP antiporter activity) and thermogenesis (proton transporter activity). Proton transporter activity requires free fatty acids as cofactor, but does not transport it. Probably mediates mitochondrial uncoupling in tissues that do not express UCP1. Also plays a key role in mPTP opening, a non-specific pore that enables free passage of the mitochondrial membranes to solutes of up to 1.5 kDa, and which contributes to cell death. It is however unclear if SLC25A4/ANT1 constitutes a pore-forming component of mPTP or regulates it. Acts as a regulator of mitophagy independently of ADP:ATP antiporter activity: promotes mitophagy via interaction with TIMM44, leading to inhibit the presequence translocase TIMM23, thereby promoting stabilization of PINK1. This Oryctolagus cuniculus (Rabbit) protein is ADP/ATP translocase 1.